Here is a 353-residue protein sequence, read N- to C-terminus: Peptide-N(4)-(N-acetyl-beta-glucosaminyl)asparagine amidase (353 aa).

Positions 125, 128, and 159 each coordinate Zn(2+). Cysteine 185 functions as the Nucleophile in the catalytic mechanism. Residues histidine 212 and aspartate 229 contribute to the active site. Glutamate 232 serves as a coordination point for substrate. Residues 316 to 353 are disordered; the sequence is SLEKTKPSKDTSTTTLTGTKGRESGSTAWKQQRGEDGS. Positions 325-334 are enriched in low complexity; the sequence is DTSTTTLTGT.

It belongs to the transglutaminase-like superfamily. PNGase family. Requires Zn(2+) as cofactor.

It is found in the cytoplasm. It carries out the reaction Hydrolysis of an N(4)-(acetyl-beta-D-glucosaminyl)asparagine residue in which the glucosamine residue may be further glycosylated, to yield a (substituted) N-acetyl-beta-D-glucosaminylamine and a peptide containing an aspartate residue.. Its function is as follows. Specifically deglycosylates the denatured form of N-linked glycoproteins in the cytoplasm and assists their proteasome-mediated degradation. Cleaves the beta-aspartyl-glucosamine (GlcNAc) of the glycan and the amide side chain of Asn, converting Asn to Asp. Prefers proteins containing high-mannose over those bearing complex type oligosaccharides. Can recognize misfolded proteins in the endoplasmic reticulum that are exported to the cytosol to be destroyed and deglycosylate them, while it has no activity toward native proteins. Deglycosylation is a prerequisite for subsequent proteasome-mediated degradation of some, but not all, misfolded glycoproteins. This chain is Peptide-N(4)-(N-acetyl-beta-glucosaminyl)asparagine amidase (PNG1), found in Kluyveromyces lactis (strain ATCC 8585 / CBS 2359 / DSM 70799 / NBRC 1267 / NRRL Y-1140 / WM37) (Yeast).